Reading from the N-terminus, the 84-residue chain is MARENKKELIGKVVSDKMSKTIVVEIVQRKMHPIYHKYLKVSKKVKAHDEKEVSKVGDKVKIIEVRPISKDKRWALVEVLEKLK.

It belongs to the universal ribosomal protein uS17 family. Part of the 30S ribosomal subunit.

One of the primary rRNA binding proteins, it binds specifically to the 5'-end of 16S ribosomal RNA. The sequence is that of Small ribosomal subunit protein uS17 from Borrelia garinii subsp. bavariensis (strain ATCC BAA-2496 / DSM 23469 / PBi) (Borreliella bavariensis).